Reading from the N-terminus, the 559-residue chain is DDB1- and CUL4-associated factor 10 (559 aa).

A disordered region spans residues 1–119 (MFPFGPHSPG…HGLGAGLGGP (119 aa)). Phosphoserine is present on residues serine 53, serine 63, serine 89, and serine 92. The segment covering 56-86 (RPGAPSLSPAPRSGELGLPGAPESSTASAPG) has biased composition (low complexity). Positions 87–97 (EPSPPSPPCRR) are enriched in pro residues. Arginine 134 carries the post-translational modification Omega-N-methylarginine. 4 WD repeats span residues 166–205 (RTHG…HIKT), 209–247 (AHED…TKVC), 251–290 (GHTS…EDGC), and 296–335 (FHTR…KSLE). Position 349 is a phosphoserine (serine 349). The segment covering 350–367 (SSDLTTSSSSSGPRVSGS) has biased composition (low complexity). The segment at 350-396 (SSDLTTSSSSSGPRVSGSPCHHSDSNSSEKHMSRASQREGVSPRNSL) is disordered. Positions 370–381 (HHSDSNSSEKHM) are enriched in basic and acidic residues. 3 WD repeats span residues 408-448 (DHGN…QEGA), 470-508 (VGRG…SELV), and 526-559 (SHND…QPKF).

Belongs to the WD repeat DCAF10 family. As to quaternary structure, interacts with DDB1.

It functions in the pathway protein modification; protein ubiquitination. Functionally, may function as a substrate receptor for CUL4-DDB1 E3 ubiquitin-protein ligase complex. This Homo sapiens (Human) protein is DDB1- and CUL4-associated factor 10 (DCAF10).